A 431-amino-acid chain; its full sequence is UDP-N-acetylglucosamine 1-carboxyvinyltransferase (431 aa).

Residue 25-26 (KN) participates in phosphoenolpyruvate binding. A UDP-N-acetyl-alpha-D-glucosamine-binding site is contributed by Arg-101. Cys-125 functions as the Proton donor in the catalytic mechanism. Cys-125 is subject to 2-(S-cysteinyl)pyruvic acid O-phosphothioketal. Positions 317 and 339 each coordinate UDP-N-acetyl-alpha-D-glucosamine.

Belongs to the EPSP synthase family. MurA subfamily.

Its subcellular location is the cytoplasm. The enzyme catalyses phosphoenolpyruvate + UDP-N-acetyl-alpha-D-glucosamine = UDP-N-acetyl-3-O-(1-carboxyvinyl)-alpha-D-glucosamine + phosphate. It functions in the pathway cell wall biogenesis; peptidoglycan biosynthesis. Functionally, cell wall formation. Adds enolpyruvyl to UDP-N-acetylglucosamine. The sequence is that of UDP-N-acetylglucosamine 1-carboxyvinyltransferase from Thermobifida fusca (strain YX).